A 142-amino-acid polypeptide reads, in one-letter code: Transcriptional regulator MraZ (142 aa).

2 consecutive SpoVT-AbrB domains span residues 5 to 51 (ASAL…PRPE) and 77 to 120 (AADV…DAAT).

It belongs to the MraZ family. Forms oligomers.

The protein resides in the cytoplasm. Its subcellular location is the nucleoid. The protein is Transcriptional regulator MraZ of Ralstonia nicotianae (strain ATCC BAA-1114 / GMI1000) (Ralstonia solanacearum).